The chain runs to 489 residues: Glycogen synthase (489 aa).

Arginine 20 serves as a coordination point for ADP-alpha-D-glucose.

This sequence belongs to the glycosyltransferase 1 family. Bacterial/plant glycogen synthase subfamily.

It catalyses the reaction [(1-&gt;4)-alpha-D-glucosyl](n) + ADP-alpha-D-glucose = [(1-&gt;4)-alpha-D-glucosyl](n+1) + ADP + H(+). Its pathway is glycan biosynthesis; glycogen biosynthesis. In terms of biological role, synthesizes alpha-1,4-glucan chains using ADP-glucose. In Pelodictyon phaeoclathratiforme (strain DSM 5477 / BU-1), this protein is Glycogen synthase.